We begin with the raw amino-acid sequence, 192 residues long: Phosphoheptose isomerase (192 aa).

The SIS domain maps to 37 to 192; the sequence is LADSFKQEGK…IQLVEKEMAK (156 aa). Residue 52–54 participates in substrate binding; sequence NGG. Positions 61 and 65 each coordinate Zn(2+). Substrate contacts are provided by residues glutamate 65, 93–94, 119–121, serine 124, and glutamine 172; these read ND and STS. Positions 172 and 180 each coordinate Zn(2+).

This sequence belongs to the SIS family. GmhA subfamily. In terms of assembly, homotetramer. Requires Zn(2+) as cofactor.

Its subcellular location is the cytoplasm. It carries out the reaction 2 D-sedoheptulose 7-phosphate = D-glycero-alpha-D-manno-heptose 7-phosphate + D-glycero-beta-D-manno-heptose 7-phosphate. Its pathway is carbohydrate biosynthesis; D-glycero-D-manno-heptose 7-phosphate biosynthesis; D-glycero-alpha-D-manno-heptose 7-phosphate and D-glycero-beta-D-manno-heptose 7-phosphate from sedoheptulose 7-phosphate: step 1/1. Catalyzes the isomerization of sedoheptulose 7-phosphate in D-glycero-D-manno-heptose 7-phosphate. The chain is Phosphoheptose isomerase from Aeromonas salmonicida (strain A449).